The following is a 349-amino-acid chain: Phenylalanine--tRNA ligase alpha subunit (349 aa).

Position 259 (glutamate 259) interacts with Mg(2+).

Belongs to the class-II aminoacyl-tRNA synthetase family. Phe-tRNA synthetase alpha subunit type 1 subfamily. In terms of assembly, tetramer of two alpha and two beta subunits. Mg(2+) is required as a cofactor.

The protein localises to the cytoplasm. The enzyme catalyses tRNA(Phe) + L-phenylalanine + ATP = L-phenylalanyl-tRNA(Phe) + AMP + diphosphate + H(+). The chain is Phenylalanine--tRNA ligase alpha subunit from Lactobacillus acidophilus (strain ATCC 700396 / NCK56 / N2 / NCFM).